The chain runs to 141 residues: Hemoglobin subunit alpha-1/2 (141 aa).

A Globin domain is found at 1–141 (VLSPADKKNV…VSTVLTSKYR (141 aa)). The residue at position 3 (S3) is a Phosphoserine. Residues K7 and K11 each carry the N6-succinyllysine modification. Position 16 is an N6-acetyllysine; alternate (K16). K16 carries the post-translational modification N6-succinyllysine; alternate. Position 24 is a phosphotyrosine (Y24). S35 is modified (phosphoserine). K40 bears the N6-succinyllysine mark. S49 carries the phosphoserine modification. H58 contacts O2. H87 is a binding site for heme b. Phosphoserine is present on S102. At T108 the chain carries Phosphothreonine. S124 and S131 each carry phosphoserine. T134 and T137 each carry phosphothreonine. S138 bears the Phosphoserine mark.

This sequence belongs to the globin family. In terms of assembly, heterotetramer of two alpha chains and two beta chains. In terms of tissue distribution, red blood cells.

Functionally, involved in oxygen transport from the lung to the various peripheral tissues. This chain is Hemoglobin subunit alpha-1/2, found in Mandrillus sphinx (Mandrill).